A 121-amino-acid chain; its full sequence is Protein p14.5 (121 aa).

Residue Ala-2 is modified to N-acetylalanine; by host. A disordered region spans residues 84-121; the sequence is SLVPDEADNKPEDDEESGGAKPKKKKHLFPKLSSHKSK. The segment covering 104-121 has biased composition (basic residues); the sequence is KPKKKKHLFPKLSSHKSK.

It belongs to the asfivirus structural protein p14.5 family. In terms of assembly, interacts with the major capsid protein. Interacts with host IRF3; this interaction interferes with the recruitment of IRF3 to TBK1. In terms of processing, acetylated.

It is found in the virion. Structural protein required for transport of intracellular particles from the assembly sites to the plasma membrane. Binds to both ssDNA and dsDNA. Suppressed the activation of the cGAS/STING pathway by interfering with the recruitment of IRF3 to TBK1, which in turn suppresses IRF3 phosphorylation, decreasing interferon production. This chain is Protein p14.5, found in African swine fever virus (isolate Pig/Kenya/KEN-50/1950) (ASFV).